We begin with the raw amino-acid sequence, 747 residues long: Tegument protein UL46 homolog (747 aa).

Disordered regions lie at residues 437-484 (FCCP…SPRT), 525-593 (QRSD…DYMR), 611-665 (TPYM…PEVV), and 689-747 (SASR…VSSL). The span at 465 to 484 (LRSSRQLPTSPPSNIVSPRT) shows a compositional bias: polar residues. The span at 528–540 (DSSSSDNSTCSST) shows a compositional bias: low complexity. A compositionally biased stretch (polar residues) spans 541–553 (ETQYITLPSTPSP). Composition is skewed to basic and acidic residues over residues 707-724 (VCRERDEESAEPRHDGFI) and 736-747 (KHPDQTERVSSL).

It belongs to the herpesviridae HHV-1 VP11/12 protein family.

It is found in the virion tegument. The protein localises to the host cell membrane. Its function is as follows. Modulates alpha trans-inducing factor-dependent activation of alpha genes. This is Tegument protein UL46 homolog from Equine herpesvirus 1 (strain Ab4p) (EHV-1).